A 445-amino-acid chain; its full sequence is Glutamate--tRNA ligase 2 (445 aa).

The 'HIGH' region signature appears at 10–20 (PSPTGMLHVGN). The short motif at 240–244 (KISKR) is the 'KMSKS' region element. Lys243 lines the ATP pocket.

This sequence belongs to the class-I aminoacyl-tRNA synthetase family. Glutamate--tRNA ligase type 1 subfamily. As to quaternary structure, monomer.

Its subcellular location is the cytoplasm. It catalyses the reaction tRNA(Glu) + L-glutamate + ATP = L-glutamyl-tRNA(Glu) + AMP + diphosphate. In terms of biological role, catalyzes the attachment of glutamate to tRNA(Glu) in a two-step reaction: glutamate is first activated by ATP to form Glu-AMP and then transferred to the acceptor end of tRNA(Glu). The polypeptide is Glutamate--tRNA ligase 2 (Rickettsia canadensis (strain McKiel)).